The primary structure comprises 433 residues: tRNA-2-methylthio-N(6)-dimethylallyladenosine synthase (433 aa).

Residues lysine 4–phenylalanine 119 form the MTTase N-terminal domain. Residues cysteine 13, cysteine 50, cysteine 82, cysteine 151, cysteine 155, and cysteine 158 each coordinate [4Fe-4S] cluster. In terms of domain architecture, Radical SAM core spans arginine 137–lysine 370. In terms of domain architecture, TRAM spans lysine 373–valine 433.

This sequence belongs to the methylthiotransferase family. MiaB subfamily. Monomer. Requires [4Fe-4S] cluster as cofactor.

The protein resides in the cytoplasm. It carries out the reaction N(6)-dimethylallyladenosine(37) in tRNA + (sulfur carrier)-SH + AH2 + 2 S-adenosyl-L-methionine = 2-methylsulfanyl-N(6)-dimethylallyladenosine(37) in tRNA + (sulfur carrier)-H + 5'-deoxyadenosine + L-methionine + A + S-adenosyl-L-homocysteine + 2 H(+). In terms of biological role, catalyzes the methylthiolation of N6-(dimethylallyl)adenosine (i(6)A), leading to the formation of 2-methylthio-N6-(dimethylallyl)adenosine (ms(2)i(6)A) at position 37 in tRNAs that read codons beginning with uridine. In Campylobacter jejuni subsp. jejuni serotype O:2 (strain ATCC 700819 / NCTC 11168), this protein is tRNA-2-methylthio-N(6)-dimethylallyladenosine synthase.